A 417-amino-acid polypeptide reads, in one-letter code: Tol-Pal system protein TolB (417 aa).

Positions 1–16 are cleaved as a signal peptide; sequence MRYLWLFLIHTIGLFA.

It belongs to the TolB family. As to quaternary structure, the Tol-Pal system is composed of five core proteins: the inner membrane proteins TolA, TolQ and TolR, the periplasmic protein TolB and the outer membrane protein Pal. They form a network linking the inner and outer membranes and the peptidoglycan layer.

It localises to the periplasm. Its function is as follows. Part of the Tol-Pal system, which plays a role in outer membrane invagination during cell division and is important for maintaining outer membrane integrity. This chain is Tol-Pal system protein TolB, found in Helicobacter pylori (strain ATCC 700392 / 26695) (Campylobacter pylori).